Here is an 87-residue protein sequence, read N- to C-terminus: MSEINKAEIVASNARAPSDTGSPEVQVALLTARINHLMPHFKTHMKDHHGRRGLLRMVSRRRKLLDYLKSRDADRYTSLIQKLGLRK.

The interval 1 to 22 (MSEINKAEIVASNARAPSDTGS) is disordered.

The protein belongs to the universal ribosomal protein uS15 family. In terms of assembly, part of the 30S ribosomal subunit. Forms a bridge to the 50S subunit in the 70S ribosome, contacting the 23S rRNA.

In terms of biological role, one of the primary rRNA binding proteins, it binds directly to 16S rRNA where it helps nucleate assembly of the platform of the 30S subunit by binding and bridging several RNA helices of the 16S rRNA. Its function is as follows. Forms an intersubunit bridge (bridge B4) with the 23S rRNA of the 50S subunit in the ribosome. The protein is Small ribosomal subunit protein uS15 of Leptothrix cholodnii (strain ATCC 51168 / LMG 8142 / SP-6) (Leptothrix discophora (strain SP-6)).